The primary structure comprises 231 residues: Sugar fermentation stimulation protein homolog (231 aa).

The protein belongs to the SfsA family.

The polypeptide is Sugar fermentation stimulation protein homolog (Geotalea uraniireducens (strain Rf4) (Geobacter uraniireducens)).